The primary structure comprises 410 residues: Cytochrome P450(MEG) (410 aa).

Cysteine 355 serves as a coordination point for heme.

The protein belongs to the cytochrome P450 family. Requires heme as cofactor.

The protein localises to the cytoplasm. It carries out the reaction reduced 2[4Fe-4S]-[ferredoxin] + progesterone + O2 + 2 H(+) = 15beta-hydroxyprogesterone + oxidized 2[4Fe-4S]-[ferredoxin] + H2O. Has the capacity to hydroxylate certain steroids in the 15-beta position. Also hydroxylates progesterone in the 11-alpha and 9-beta position. The polypeptide is Cytochrome P450(MEG) (cyp106A2) (Priestia megaterium (Bacillus megaterium)).